We begin with the raw amino-acid sequence, 228 residues long: RING1 and YY1-binding protein (228 aa).

Disordered stretches follow at residues 1 to 21 (MTMG…PAAD), 65 to 156 (QVAQ…RSTA), and 172 to 228 (DFKE…DESF). The RanBP2-type zinc finger occupies 21 to 50 (DEGFWDCSVCTFRNSAEAFKCSICDVRKGT). Residues 76-98 (PKKEKKEKVEKQDKEKPEKDKEI) show a composition bias toward basic and acidic residues. K77 is covalently cross-linked (Glycyl lysine isopeptide (Lys-Gly) (interchain with G-Cter in SUMO2)). Residue S99 is modified to Phosphoserine. The span at 113–122 (PKSDILKDPP) shows a compositional bias: basic and acidic residues. Phosphoserine is present on residues S123, S127, and S130. The span at 124-143 (EANSIQSANATTKTSETNHT) shows a compositional bias: polar residues. The segment at 143–226 (TSRPRLKNVD…KGDMSAVNDE (84 aa)) is interaction with GABPB1 and FANK1. Residues 179-204 (SSSTSSSTVTSSAGSEQQNQSSSGSE) are compositionally biased toward low complexity. At S227 the chain carries Phosphoserine.

Monomer. Component of repressive BCOR complex containing Polycomb group subcomplex at least composed of BCOR, PCGF1, RING1 and RNF2/RING2. Component of PCR1-like complexes. Interacts with PCGF1. Part of a PCR1-like complex that contains AUTS2, PCGF5, RNF2, CSNK2B and RYBP. Interacts with RNF2; the interaction is direct. Interacts with CBX2, YAF2, RING1 and RNF2. Interacts with ubiquitin and ubiquitinated proteins. Interacts with ubiquitinated histone H2A. Interacts with apoptin, DEDD, FADD, CASP8, CASP10, YY1 and GABPB1. Together with GABPB1 and YY1, it forms a ternary complex, probably being the bridge factor between these two transcription factors. Interacts with MDM2, and thereby inhibits ubiquitination of TP53. Identified in a ternary complex containing MDM2, TP53 and RYBP. Interacts with FANK1; may prevent the ubiquitin-mediated proteasomal degradation of FANK1. Interacts with IFT57. Post-translationally, monoubiquitinated. Down-regulated in breast cancer tissues and in several breast cancer cell lines (at protein level). Widely expressed with highest levels in lymphoid tissues and placenta.

The protein localises to the nucleus. It localises to the cytoplasm. It is found in the nucleoplasm. Component of a Polycomb group (PcG) multiprotein PRC1-like complex, a complex class required to maintain the transcriptionally repressive state of many genes, including Hox genes, throughout development. PcG PRC1-like complex acts via chromatin remodeling and modification of histones; it mediates monoubiquitination of histone H2A 'Lys-119', rendering chromatin heritably changed in its expressibility. Component of a PRC1-like complex that mediates monoubiquitination of histone H2A 'Lys-119' on the X chromosome and is required for normal silencing of one copy of the X chromosome in XX females. May stimulate ubiquitination of histone H2A 'Lys-119' by recruiting the complex to target sites. Inhibits ubiquitination and subsequent degradation of TP53, and thereby plays a role in regulating transcription of TP53 target genes. May also regulate the ubiquitin-mediated proteasomal degradation of other proteins like FANK1 to regulate apoptosis. May be implicated in the regulation of the transcription as a repressor of the transcriptional activity of E4TF1. May bind to DNA. May play a role in the repression of tumor growth and metastasis in breast cancer by down-regulating SRRM3. This chain is RING1 and YY1-binding protein (RYBP), found in Homo sapiens (Human).